A 100-amino-acid polypeptide reads, in one-letter code: Urease subunit gamma (100 aa).

The protein belongs to the urease gamma subunit family. Heterotrimer of UreA (gamma), UreB (beta) and UreC (alpha) subunits. Three heterotrimers associate to form the active enzyme.

It is found in the cytoplasm. The catalysed reaction is urea + 2 H2O + H(+) = hydrogencarbonate + 2 NH4(+). Its pathway is nitrogen metabolism; urea degradation; CO(2) and NH(3) from urea (urease route): step 1/1. The chain is Urease subunit gamma from Cupriavidus pinatubonensis (strain JMP 134 / LMG 1197) (Cupriavidus necator (strain JMP 134)).